The chain runs to 456 residues: tRNA modification GTPase MnmE (456 aa).

The (6S)-5-formyl-5,6,7,8-tetrahydrofolate site is built by K29, E87, and R126. Residues 222–380 form the TrmE-type G domain; that stretch reads GYKLAIIGRP…LLSLLASWLD (159 aa). K(+) is bound at residue N232. GTP contacts are provided by residues 232–237, 251–257, and 276–279; these read NVGKSS, SDIPGTT, and DTAG. S236 is a Mg(2+) binding site. S251, I253, and T256 together coordinate K(+). A Mg(2+)-binding site is contributed by T257. K456 contacts (6S)-5-formyl-5,6,7,8-tetrahydrofolate.

Belongs to the TRAFAC class TrmE-Era-EngA-EngB-Septin-like GTPase superfamily. TrmE GTPase family. Homodimer. Heterotetramer of two MnmE and two MnmG subunits. K(+) serves as cofactor.

The protein resides in the cytoplasm. Exhibits a very high intrinsic GTPase hydrolysis rate. Involved in the addition of a carboxymethylaminomethyl (cmnm) group at the wobble position (U34) of certain tRNAs, forming tRNA-cmnm(5)s(2)U34. The protein is tRNA modification GTPase MnmE of Wolinella succinogenes (strain ATCC 29543 / DSM 1740 / CCUG 13145 / JCM 31913 / LMG 7466 / NCTC 11488 / FDC 602W) (Vibrio succinogenes).